The primary structure comprises 211 residues: Fucoxanthin-chlorophyll a-c binding protein F, chloroplastic (211 aa).

The transit peptide at 1–33 (AIACAAAPGLRGPSAFNGAALSTPAKSSSAMKM) directs the protein to the chloroplast. The next 3 membrane-spanning stretches (helical) occupy residues 75 to 95 (IAMLAIAGHLTQQNTRLPGML), 116 to 136 (IPPGGLAQIFGFIGFLELAVM), and 177 to 197 (GRAAQMGILGMMVHEELSNQP).

It belongs to the fucoxanthin chlorophyll protein family. The LHC complex of chromophytic algae is composed of fucoxanthin, chlorophyll A and C bound non-covalently by fucoxanthin chlorophyll proteins (FCPs). The ratio of pigments in this LHC is; fucoxanthin: chlorophyll C: chlorophyll A; (0.6-1): (0.1-0.3): (1).

It localises to the plastid. Its subcellular location is the chloroplast thylakoid membrane. The light-harvesting complex (LHC) functions as a light receptor, it captures and delivers excitation energy to photosystems with which it is closely associated. Energy is transferred from the carotenoid and chlorophyll C (or B) to chlorophyll A and the photosynthetic reaction centers where it is used to synthesize ATP and reducing power. The chain is Fucoxanthin-chlorophyll a-c binding protein F, chloroplastic (FCPF) from Macrocystis pyrifera (Giant kelp).